The chain runs to 229 residues: Cytochrome c oxidase subunit 2 (229 aa).

At 1–14 (MANPTHLGFQDAMS) the chain is on the mitochondrial intermembrane side. A helical transmembrane segment spans residues 15–45 (PLMEELLYFHDHTLMILFLISSLVFYMIFAL). At 46 to 59 (LFPKLYYPNTSDVQ) the chain is on the mitochondrial matrix side. The helical transmembrane segment at 60-87 (EVEVIWTVLPAIVLISIALPSLRTLYLM) threads the bilayer. Over 88 to 229 (DETNNPCLTI…QLWLEDSILS (142 aa)) the chain is Mitochondrial intermembrane. Residues His161, Cys196, Glu198, Cys200, His204, and Met207 each contribute to the Cu cation site. Residue Glu198 participates in Mg(2+) binding.

This sequence belongs to the cytochrome c oxidase subunit 2 family. In terms of assembly, component of the cytochrome c oxidase (complex IV, CIV), a multisubunit enzyme composed of 14 subunits. The complex is composed of a catalytic core of 3 subunits MT-CO1, MT-CO2 and MT-CO3, encoded in the mitochondrial DNA, and 11 supernumerary subunits COX4I, COX5A, COX5B, COX6A, COX6B, COX6C, COX7A, COX7B, COX7C, COX8 and NDUFA4, which are encoded in the nuclear genome. The complex exists as a monomer or a dimer and forms supercomplexes (SCs) in the inner mitochondrial membrane with NADH-ubiquinone oxidoreductase (complex I, CI) and ubiquinol-cytochrome c oxidoreductase (cytochrome b-c1 complex, complex III, CIII), resulting in different assemblies (supercomplex SCI(1)III(2)IV(1) and megacomplex MCI(2)III(2)IV(2)). Found in a complex with TMEM177, COA6, COX18, COX20, SCO1 and SCO2. Interacts with TMEM177 in a COX20-dependent manner. Interacts with COX20. Interacts with COX16. The cofactor is Cu cation.

The protein resides in the mitochondrion inner membrane. It catalyses the reaction 4 Fe(II)-[cytochrome c] + O2 + 8 H(+)(in) = 4 Fe(III)-[cytochrome c] + 2 H2O + 4 H(+)(out). Component of the cytochrome c oxidase, the last enzyme in the mitochondrial electron transport chain which drives oxidative phosphorylation. The respiratory chain contains 3 multisubunit complexes succinate dehydrogenase (complex II, CII), ubiquinol-cytochrome c oxidoreductase (cytochrome b-c1 complex, complex III, CIII) and cytochrome c oxidase (complex IV, CIV), that cooperate to transfer electrons derived from NADH and succinate to molecular oxygen, creating an electrochemical gradient over the inner membrane that drives transmembrane transport and the ATP synthase. Cytochrome c oxidase is the component of the respiratory chain that catalyzes the reduction of oxygen to water. Electrons originating from reduced cytochrome c in the intermembrane space (IMS) are transferred via the dinuclear copper A center (CU(A)) of subunit 2 and heme A of subunit 1 to the active site in subunit 1, a binuclear center (BNC) formed by heme A3 and copper B (CU(B)). The BNC reduces molecular oxygen to 2 water molecules using 4 electrons from cytochrome c in the IMS and 4 protons from the mitochondrial matrix. In Alligator mississippiensis (American alligator), this protein is Cytochrome c oxidase subunit 2 (MT-CO2).